Consider the following 133-residue polypeptide: Small ribosomal subunit protein uS8c (133 aa).

2 disordered regions span residues Met-1–Thr-23 and Phe-44–Arg-133. 2 stretches are compositionally biased toward polar residues: residues Ala-12–Thr-23 and Thr-55–Gln-66. Residues Gly-67 to Ser-81 show a composition bias toward basic residues. A compositionally biased stretch (basic and acidic residues) spans Thr-114–Arg-133.

Belongs to the universal ribosomal protein uS8 family. In terms of assembly, part of the 30S ribosomal subunit.

The protein localises to the plastid. The protein resides in the chloroplast. Its function is as follows. One of the primary rRNA binding proteins, it binds directly to 16S rRNA central domain where it helps coordinate assembly of the platform of the 30S subunit. The polypeptide is Small ribosomal subunit protein uS8c (rps8) (Selaginella uncinata (Blue spike-moss)).